A 428-amino-acid chain; its full sequence is Cell number regulator 13 (428 aa).

A compositionally biased stretch (basic and acidic residues) spans 233–280; sequence PEKETNVKAPEKKGSNYSESKGETAKSFDDDDDYPKKQNGDYPKKQKD. Residues 233 to 290 form a disordered region; sequence PEKETNVKAPEKKGSNYSESKGETAKSFDDDDDYPKKQNGDYPKKQKDTCSTQRCSSQ. A compositionally biased stretch (polar residues) spans 281–290; it reads TCSTQRCSSQ. The chain crosses the membrane as a helical span at residues 354 to 370; sequence IMAYSLILSCCCYTCCV.

Expressed in roots, coleoptiles, leaves, stalks, apical meristems, immature ears, embryos, endosperm, pericarp, silks and tassel spikelets. Not detected in pollen.

It is found in the membrane. This Zea mays (Maize) protein is Cell number regulator 13 (CNR13).